Reading from the N-terminus, the 309-residue chain is MSIRIIPQDELGSSEKRTADMIPPLLFPRLKNLYNRRAERLRELAENNPLGDYLRFAALIAHAQEVVLYDHPLEMDLTARIKEASAQGKPPLDIHVLPRDKHWQKLLMALIAELKPEMSGPALAVIENLEKASTQELEDMASALFASDFSSVSSDKAPFIWAALSLYWAQMANLIPGKARAEYGEQRQYCPVCGSMPVSSMVQIGTTQGLRYLHCNLCETEWHVVRVKCSNCEQSGKLHYWSLDDEQAAIKAESCDDCGTYLKILYQEKEPKVEAVADDLASLVLDARMEQEGYARSSINPFLFPGEGE.

It belongs to the FdhE family.

The protein resides in the cytoplasm. Its function is as follows. Necessary for formate dehydrogenase activity. This is Protein FdhE from Escherichia coli O139:H28 (strain E24377A / ETEC).